A 493-amino-acid polypeptide reads, in one-letter code: Occludin (493 aa).

Residues 1–47 (MYSRPSNYAPSKDVYGGEMRSQPAYSYYPEEEIQHFYRWSSPPGIIK) lie on the Cytoplasmic side of the membrane. Residues 41-250 (SPPGIIKIMS…IIFFAVKTRK (210 aa)) enclose the MARVEL domain. A helical membrane pass occupies residues 48-70 (IMSILIVVMCVGIFACVASTLPW). Over 71 to 116 (DLDITGQSMGYGMGSGSYSGGYTGYGFGGSQMGLGFAYGGNYTDPR) the chain is Extracellular. Residues 117-141 (AAKGFILAMAAFCFIIGLVIFVMLV) traverse the membrane as a helical segment. The Cytoplasmic portion of the chain corresponds to 142–151 (TRTPLSTSRK). A helical transmembrane segment spans residues 152–176 (FYLIVIIVSAIIGGLVFIATIVYTV). Topologically, residues 177–224 (GVNPVAQASGSAFYTQIVSICNQFYSPVQTGVFVNQYLYHYCVVEPQE) are extracellular. Cysteine 197 and cysteine 218 are disulfide-bonded. The helical transmembrane segment at 225-246 (AIAIVLGFLIVVAFAIIIFFAV) threads the bilayer. Residues 247–493 (KTRKKINQYG…IKQMVSNYDK (247 aa)) lie on the Cytoplasmic side of the membrane. Residues 334 to 407 (YGMSPRHYSS…TKQRQEYKQE (74 aa)) form a disordered region. Residues 352–361 (APPKKRPGKP) show a composition bias toward basic residues. The residue at position 375 (threonine 375) is a Phosphothreonine; by CK2; in vitro. Position 379 is a phosphoserine; by CK2; in vitro (serine 379). A compositionally biased stretch (acidic residues) spans 379–389 (SADELEDDSWD). The OCEL domain occupies 386–493 (DSWDSEYPPI…IKQMVSNYDK (108 aa)). Positions 396–428 (TQTKQRQEYKQEFASDLHEYKRLQAELDELSKI) form a coiled coil.

The protein belongs to the ELL/occludin family. As to quaternary structure, interacts in vitro with cingulin, possibly directly. Interacts with ZO-1. Post-translationally, phosphorylated. Localized at tight junctions of both epithelial and endothelial cells.

The protein resides in the cell membrane. Its subcellular location is the cell junction. It localises to the tight junction. Its function is as follows. Probably plays a role in the formation and regulation of the tight junction (TJ) paracellular permeability barrier. This chain is Occludin (ocln), found in Xenopus laevis (African clawed frog).